Reading from the N-terminus, the 77-residue chain is Apelin (77 aa).

Residues 1-22 (MNVKILTLVIVLVVSLLCSASA) form the signal peptide. The segment at 21–77 (SAGPMASTEHSKEIEEVGSMRTPLRQNPARAGRSQRPAGWRRRRPRPRLSHKGPMPF) is disordered. Residues 59 to 71 (GWRRRRPRPRLSH) show a composition bias toward basic residues.

The protein belongs to the apelin family.

The protein resides in the secreted. The protein localises to the extracellular space. Peptide hormone that functions as endogenous ligand for the G-protein-coupled apelin receptor (aplnra and/or aplnrb), that plays a role in cadiovascular homeostasis. Functions as a balanced agonist activating both G(i) protein pathway and beta-arrestin pathway of APLNR. Downstream G proteins activation, apelin can inhibit cAMP production and activate key intracellular effectors such as ERKs. On the other hand, APLNR activation induces beta-arrestin recruitment to the membrane leading to desensitization and internalization of the receptor. Apelin blunts cardiac hypertrophic induction from APLNR on response to pathological stimuli, but also induces myocardial hypertrophy under normal conditions. Involved in the regulation of cardiac precursor cell movements during gastrulation and heart morphogenesis. Plays a role in early coronary blood vessels formation. Mediates myocardial contractility in an ERK1/2-dependent manner. May also have a role in the central control of body fluid homeostasis. The sequence is that of Apelin from Danio rerio (Zebrafish).